Reading from the N-terminus, the 78-residue chain is Acyl carrier protein (78 aa).

In terms of domain architecture, Carrier spans methionine 1–glycine 76. Serine 36 bears the O-(pantetheine 4'-phosphoryl)serine mark.

It belongs to the acyl carrier protein (ACP) family. Post-translationally, 4'-phosphopantetheine is transferred from CoA to a specific serine of apo-ACP by AcpS. This modification is essential for activity because fatty acids are bound in thioester linkage to the sulfhydryl of the prosthetic group.

The protein localises to the cytoplasm. It participates in lipid metabolism; fatty acid biosynthesis. Functionally, carrier of the growing fatty acid chain in fatty acid biosynthesis. The sequence is that of Acyl carrier protein from Bdellovibrio bacteriovorus (strain ATCC 15356 / DSM 50701 / NCIMB 9529 / HD100).